A 504-amino-acid polypeptide reads, in one-letter code: ATP synthase subunit alpha, chloroplastic (504 aa).

169 to 176 provides a ligand contact to ATP; it reads GDRQTGKT.

It belongs to the ATPase alpha/beta chains family. F-type ATPases have 2 components, CF(1) - the catalytic core - and CF(0) - the membrane proton channel. CF(1) has five subunits: alpha(3), beta(3), gamma(1), delta(1), epsilon(1). CF(0) has four main subunits: a, b, b' and c.

It localises to the plastid. The protein localises to the chloroplast thylakoid membrane. It catalyses the reaction ATP + H2O + 4 H(+)(in) = ADP + phosphate + 5 H(+)(out). Produces ATP from ADP in the presence of a proton gradient across the membrane. The alpha chain is a regulatory subunit. The sequence is that of ATP synthase subunit alpha, chloroplastic from Stigeoclonium helveticum (Green alga).